Reading from the N-terminus, the 226-residue chain is ATP synthase F(0) complex subunit a (226 aa).

The next 6 membrane-spanning stretches (helical) occupy residues 5 to 25 (LFAP…LIII), 68 to 88 (WSLM…LGML), 97 to 117 (QLSM…ATGF), 136 to 156 (FLIP…PVAL), 179 to 199 (LVLM…LALL), and 201 to 221 (ILEF…VSLY).

The protein belongs to the ATPase A chain family. In terms of assembly, component of the ATP synthase complex composed at least of ATP5F1A/subunit alpha, ATP5F1B/subunit beta, ATP5MC1/subunit c (homooctomer), MT-ATP6/subunit a, MT-ATP8/subunit 8, ATP5ME/subunit e, ATP5MF/subunit f, ATP5MG/subunit g, ATP5MK/subunit k, ATP5MJ/subunit j, ATP5F1C/subunit gamma, ATP5F1D/subunit delta, ATP5F1E/subunit epsilon, ATP5PF/subunit F6, ATP5PB/subunit b, ATP5PD/subunit d, ATP5PO/subunit OSCP. ATP synthase complex consists of a soluble F(1) head domain (subunits alpha(3) and beta(3)) - the catalytic core - and a membrane F(0) domain - the membrane proton channel (subunits c, a, 8, e, f, g, k and j). These two domains are linked by a central stalk (subunits gamma, delta, and epsilon) rotating inside the F1 region and a stationary peripheral stalk (subunits F6, b, d, and OSCP). Interacts with DNAJC30; interaction is direct.

The protein resides in the mitochondrion inner membrane. It catalyses the reaction H(+)(in) = H(+)(out). Subunit a, of the mitochondrial membrane ATP synthase complex (F(1)F(0) ATP synthase or Complex V) that produces ATP from ADP in the presence of a proton gradient across the membrane which is generated by electron transport complexes of the respiratory chain. ATP synthase complex consist of a soluble F(1) head domain - the catalytic core - and a membrane F(1) domain - the membrane proton channel. These two domains are linked by a central stalk rotating inside the F(1) region and a stationary peripheral stalk. During catalysis, ATP synthesis in the catalytic domain of F(1) is coupled via a rotary mechanism of the central stalk subunits to proton translocation. With the subunit c (ATP5MC1), forms the proton-conducting channel in the F(0) domain, that contains two crucial half-channels (inlet and outlet) that facilitate proton movement from the mitochondrial intermembrane space (IMS) into the matrix. Protons are taken up via the inlet half-channel and released through the outlet half-channel, following a Grotthuss mechanism. The sequence is that of ATP synthase F(0) complex subunit a from Balaenoptera musculus (Blue whale).